A 257-amino-acid chain; its full sequence is Enterotoxin type A (257 aa).

An N-terminal signal peptide occupies residues 1–24 (MKKTAFTLLLFIALTLTTSPLVNG). Cysteine 120 and cysteine 130 are oxidised to a cystine. Residues histidine 211, histidine 249, and aspartate 251 each contribute to the Zn(2+) site.

Belongs to the staphylococcal/streptococcal toxin family. Monomer. Interacts with MHC class II molecules alpha/HLA-DRB1 and beta/HLA-DRA chains. The interaction with MHC-II molecules occurs at both zinc-dependent and zinc-independent sites. Interacts with T-cell receptor beta variable 7-9/TRBV7-9. Zn(2+) serves as cofactor.

Its subcellular location is the secreted. Functionally, staphylococcal enterotoxin that activates the host immune system by binding as unprocessed molecules to major histocompatibility (MHC) complex class II and T-cell receptor (TCR) molecules. In turn, waves of cellular activation, cytokine production, and migration into the lung tissue and airways occur via alphabeta T-cells. Also causes the intoxication staphylococcal food poisoning syndrome. The illness is characterized by high fever, hypotension, diarrhea, shock, and in some cases death. The polypeptide is Enterotoxin type A (entA) (Staphylococcus aureus).